The following is a 267-amino-acid chain: Tryptophan synthase alpha chain (267 aa).

Active-site proton acceptor residues include Glu-49 and Asp-60.

The protein belongs to the TrpA family. As to quaternary structure, tetramer of two alpha and two beta chains.

The catalysed reaction is (1S,2R)-1-C-(indol-3-yl)glycerol 3-phosphate + L-serine = D-glyceraldehyde 3-phosphate + L-tryptophan + H2O. The protein operates within amino-acid biosynthesis; L-tryptophan biosynthesis; L-tryptophan from chorismate: step 5/5. Its function is as follows. The alpha subunit is responsible for the aldol cleavage of indoleglycerol phosphate to indole and glyceraldehyde 3-phosphate. This is Tryptophan synthase alpha chain from Cyanothece sp. (strain PCC 7425 / ATCC 29141).